The chain runs to 205 residues: Proteasome subunit beta type-3 (205 aa).

The protein belongs to the peptidase T1B family. The 26S proteasome consists of a 20S proteasome core and two 19S regulatory subunits. The 20S proteasome core is composed of 28 subunits that are arranged in four stacked rings, resulting in a barrel-shaped structure. The two end rings are each formed by seven alpha subunits, and the two central rings are each formed by seven beta subunits. The catalytic chamber with the active sites is on the inside of the barrel.

Its subcellular location is the cytoplasm. It is found in the nucleus. Functionally, non-catalytic component of the proteasome, a multicatalytic proteinase complex which is characterized by its ability to cleave peptides with Arg, Phe, Tyr, Leu, and Glu adjacent to the leaving group at neutral or slightly basic pH. The proteasome has an ATP-dependent proteolytic activity. The protein is Proteasome subunit beta type-3 (psmB3) of Dictyostelium discoideum (Social amoeba).